Reading from the N-terminus, the 372-residue chain is Flagellar P-ring protein (372 aa).

Positions 1–29 are cleaved as a signal peptide; sequence MPARPIPVPAFALALALAAALAVPAPAAA.

The protein belongs to the FlgI family. The basal body constitutes a major portion of the flagellar organelle and consists of four rings (L,P,S, and M) mounted on a central rod.

The protein resides in the periplasm. It is found in the bacterial flagellum basal body. Assembles around the rod to form the L-ring and probably protects the motor/basal body from shearing forces during rotation. The polypeptide is Flagellar P-ring protein (Anaeromyxobacter dehalogenans (strain 2CP-1 / ATCC BAA-258)).